The chain runs to 65 residues: Large ribosomal subunit protein bL35 (65 aa).

The span at 1-45 (MPKMKSHSGAKKRFKKTGNGKIKRKKANKGHLLTKKNAKRKRQLR) shows a compositional bias: basic residues. Positions 1–65 (MPKMKSHSGA…RDRIKRMLST (65 aa)) are disordered. A compositionally biased stretch (basic and acidic residues) spans 48–57 (VVVDDKANRD).

The protein belongs to the bacterial ribosomal protein bL35 family.

This Salinibacter ruber (strain DSM 13855 / M31) protein is Large ribosomal subunit protein bL35.